The primary structure comprises 317 residues: Ribosomal protein L11 methyltransferase (317 aa).

S-adenosyl-L-methionine contacts are provided by Thr158, Gly179, Asp201, and Asn244.

It belongs to the methyltransferase superfamily. PrmA family.

It localises to the cytoplasm. The catalysed reaction is L-lysyl-[protein] + 3 S-adenosyl-L-methionine = N(6),N(6),N(6)-trimethyl-L-lysyl-[protein] + 3 S-adenosyl-L-homocysteine + 3 H(+). Functionally, methylates ribosomal protein L11. The sequence is that of Ribosomal protein L11 methyltransferase from Streptococcus mutans serotype c (strain ATCC 700610 / UA159).